Reading from the N-terminus, the 1086-residue chain is Bifunctional helicase and thymine dioxygenase JBP2 (1086 aa).

Residues 1 to 518 (MPVPSHVSVA…PPIYLPGRLL (518 aa)) are thymine dioxygenase. The tract at residues 187–220 (DESNRGVLFNSDSFGNGRGGSSISSSERSVDEND) is disordered. Fe cation is bound by residues histidine 393, aspartate 395, and histidine 443. 2-oxoglutarate is bound at residue arginine 457. The DNA Helicase stretch occupies residues 519–1084 (EVLSPVQQAA…RHGDTVRSES (566 aa)). The region spanning 533–708 (VDRLSKGNGC…YRLIGWINSD (176 aa)) is the Helicase ATP-binding domain. 546–553 (LTMGLGKT) is a binding site for ATP. Residues 659–662 (DEGH) carry the DEAH box motif. One can recognise a Helicase C-terminal domain in the interval 883 to 1041 (VLISILHSIR…RAVPPEELLD (159 aa)).

In the C-terminal section; belongs to the SNF2/RAD54 helicase family. It in the N-terminal section; belongs to the TET family. JBP2 subfamily. Fe(2+) is required as a cofactor.

It localises to the nucleus. The enzyme catalyses ATP + H2O = ADP + phosphate + H(+). It catalyses the reaction thymine + 2-oxoglutarate + O2 = 5-hydroxymethyluracil + succinate + CO2. In terms of biological role, dioxygenase that catalyzes the first step of DNA base J (beta-d-glucosyl-HOMedU) biosynthesis by converting thymine to 5-hydroxymethyluracil (HOMedU). DNA base J is a hypermodified thymidine residue found in the genome of kinetoplastid parasites, which is localized primarily to repetitive DNA, namely the telomeres, and is implicated in the regulation of antigenic variation. Probably also acts as a DNA helicase. Recognizes and binds specific regions of the genome, hydrolyzes ATP and allows the DNA base J de novo synthesis. Involved in initial synthesis of DNA base J, JBP1 being able to act via the basal level of DNA base J and propagate further synthesis. In contrast to JBP1, it does not specifically bind DNA base J, however it binds chromatin. This Trypanosoma cruzi (strain CL Brener) protein is Bifunctional helicase and thymine dioxygenase JBP2 (JBP2).